A 316-amino-acid chain; its full sequence is dTDP-4-dehydro-6-deoxyglucose reductase (316 aa).

An NAD(+)-binding site is contributed by 16 to 17; the sequence is FI. The Proton acceptor role is filled by tyrosine 151. Lysine 155 is a binding site for NAD(+).

It belongs to the NAD(P)-dependent epimerase/dehydratase family.

It catalyses the reaction dTDP-alpha-D-fucose + NAD(+) = dTDP-4-dehydro-6-deoxy-alpha-D-glucose + NADH + H(+). The catalysed reaction is dTDP-alpha-D-fucose + NADP(+) = dTDP-4-dehydro-6-deoxy-alpha-D-glucose + NADPH + H(+). It functions in the pathway bacterial outer membrane biogenesis; LPS O-antigen biosynthesis. Its activity is regulated as follows. Inhibited by Cu(2+), while other divalent cations such as Ca(2+), Co(2+), Fe(2+), Mn(2+) and Mg(2+) have no obvious effects on enzyme activity. Its function is as follows. Catalyzes the stereospecific reduction of the C-4 keto group of dTDP-4-dehydro-6-deoxy-D-glucose, leading to dTDP-D-fucopyranose. This is a step in the biosynthesis of D-fucofuranose, a component of E.coli O52 O antigen. Is more efficient using NADH than NADPH as cosubstrate. The sequence is that of dTDP-4-dehydro-6-deoxyglucose reductase (fcf1) from Escherichia coli.